The sequence spans 38 residues: Cytochrome b6-f complex subunit 5 (38 aa).

Residues 5-25 (LLSGIVLGLIPITLAGLFVTA) traverse the membrane as a helical segment.

This sequence belongs to the PetG family. As to quaternary structure, the 4 large subunits of the cytochrome b6-f complex are cytochrome b6, subunit IV (17 kDa polypeptide, PetD), cytochrome f and the Rieske protein, while the 4 small subunits are PetG, PetL, PetM and PetN. The complex functions as a dimer.

It is found in the plastid. It localises to the chloroplast thylakoid membrane. Functionally, component of the cytochrome b6-f complex, which mediates electron transfer between photosystem II (PSII) and photosystem I (PSI), cyclic electron flow around PSI, and state transitions. PetG is required for either the stability or assembly of the cytochrome b6-f complex. This is Cytochrome b6-f complex subunit 5 from Adiantum capillus-veneris (Maidenhair fern).